A 115-amino-acid polypeptide reads, in one-letter code: Ribonuclease P protein component (115 aa).

This sequence belongs to the RnpA family. As to quaternary structure, consists of a catalytic RNA component (M1 or rnpB) and a protein subunit.

It carries out the reaction Endonucleolytic cleavage of RNA, removing 5'-extranucleotides from tRNA precursor.. RNaseP catalyzes the removal of the 5'-leader sequence from pre-tRNA to produce the mature 5'-terminus. It can also cleave other RNA substrates such as 4.5S RNA. The protein component plays an auxiliary but essential role in vivo by binding to the 5'-leader sequence and broadening the substrate specificity of the ribozyme. The polypeptide is Ribonuclease P protein component (Blochmanniella pennsylvanica (strain BPEN)).